Reading from the N-terminus, the 275-residue chain is MEQNGSTVVRAYAKINLSLDVVKKRDDGYHEINSLFQNISLYDRLSIVKIDRGLEIKSNVEIENNILYKVWDLFCEKYKEPEFGFRVILEKNIPMEAGLGGGSADAAALLFFLGKTFKIPTSELLNLAIKIGSDVPFFLIGGTAVVKGKGEKIEPLPALKGYYVDLLTSENGISTKEAYSLLNPSLFNRAPCSPYVLYEAYKNRNAGEIKRCTYNIFEKVVANNYKEIMANIKRLRRTHITAALTGSGSAVFGVSFRDGKYKFVSRGVEYEETKL.

The active site involves K14. 94 to 104 (PMEAGLGGGSA) serves as a coordination point for ATP. Residue D134 is part of the active site.

The protein belongs to the GHMP kinase family. IspE subfamily.

It carries out the reaction 4-CDP-2-C-methyl-D-erythritol + ATP = 4-CDP-2-C-methyl-D-erythritol 2-phosphate + ADP + H(+). It participates in isoprenoid biosynthesis; isopentenyl diphosphate biosynthesis via DXP pathway; isopentenyl diphosphate from 1-deoxy-D-xylulose 5-phosphate: step 3/6. In terms of biological role, catalyzes the phosphorylation of the position 2 hydroxy group of 4-diphosphocytidyl-2C-methyl-D-erythritol. This is 4-diphosphocytidyl-2-C-methyl-D-erythritol kinase from Thermosipho africanus (strain TCF52B).